The chain runs to 112 residues: Large ribosomal subunit protein P1 (112 aa).

A compositionally biased stretch (low complexity) spans 71-90 (PAQAAAAAPAGGAPAAAAPA). Residues 71–112 (PAQAAAAAPAGGAPAAAAPAESKEGRRSQGESDDDMGFGLLD) are disordered. Residues 91-100 (ESKEGRRSQG) show a composition bias toward basic and acidic residues.

The protein belongs to the eukaryotic ribosomal protein P1/P2 family. P1 and P2 exist as dimers at the large ribosomal subunit.

Functionally, plays an important role in the elongation step of protein synthesis. The protein is Large ribosomal subunit protein P1 (rpl-21) of Oscheius tipulae.